A 78-amino-acid polypeptide reads, in one-letter code: U29-theraphotoxin-Cg1a (78 aa).

The first 19 residues, 1-19 (MRYQTVFWILLIALCTVNP), serve as a signal peptide directing secretion. Disulfide bonds link Cys42–Cys56, Cys49–Cys60, Cys55–Cys77, and Cys67–Cys73.

This sequence belongs to the neurotoxin 13 (insecticidal toxin ABC) family. 03 (JZTX-59) subfamily. As to expression, expressed by the venom gland.

The protein resides in the secreted. Its function is as follows. Probable ion channel inhibitor. The chain is U29-theraphotoxin-Cg1a from Chilobrachys guangxiensis (Chinese earth tiger tarantula).